Reading from the N-terminus, the 680-residue chain is DNA-directed RNA polymerase subunit beta' (680 aa).

Positions 69, 71, 87, and 90 each coordinate Zn(2+). Residues Asp-489, Asp-491, and Asp-493 each coordinate Mg(2+).

Belongs to the RNA polymerase beta' chain family. RpoC1 subfamily. In terms of assembly, in plastids the minimal PEP RNA polymerase catalytic core is composed of four subunits: alpha, beta, beta', and beta''. When a (nuclear-encoded) sigma factor is associated with the core the holoenzyme is formed, which can initiate transcription. The cofactor is Mg(2+). It depends on Zn(2+) as a cofactor.

The protein resides in the plastid. It localises to the chloroplast. It carries out the reaction RNA(n) + a ribonucleoside 5'-triphosphate = RNA(n+1) + diphosphate. DNA-dependent RNA polymerase catalyzes the transcription of DNA into RNA using the four ribonucleoside triphosphates as substrates. This Cucumis sativus (Cucumber) protein is DNA-directed RNA polymerase subunit beta'.